The sequence spans 322 residues: Aspartate carbamoyltransferase catalytic subunit (322 aa).

Carbamoyl phosphate-binding residues include Arg-65 and Thr-66. Lys-93 is a binding site for L-aspartate. Carbamoyl phosphate contacts are provided by Arg-115, His-143, and Gln-146. Positions 176 and 230 each coordinate L-aspartate. Carbamoyl phosphate contacts are provided by Gly-271 and Pro-272.

Belongs to the aspartate/ornithine carbamoyltransferase superfamily. ATCase family. In terms of assembly, heterododecamer (2C3:3R2) of six catalytic PyrB chains organized as two trimers (C3), and six regulatory PyrI chains organized as three dimers (R2).

The enzyme catalyses carbamoyl phosphate + L-aspartate = N-carbamoyl-L-aspartate + phosphate + H(+). It functions in the pathway pyrimidine metabolism; UMP biosynthesis via de novo pathway; (S)-dihydroorotate from bicarbonate: step 2/3. Functionally, catalyzes the condensation of carbamoyl phosphate and aspartate to form carbamoyl aspartate and inorganic phosphate, the committed step in the de novo pyrimidine nucleotide biosynthesis pathway. The sequence is that of Aspartate carbamoyltransferase catalytic subunit from Brucella canis (strain ATCC 23365 / NCTC 10854 / RM-666).